We begin with the raw amino-acid sequence, 166 residues long: Phospholipase A2 inhibitor clone 06/08 (166 aa).

The N-terminal stretch at 1–19 is a signal peptide; it reads MRLILLSGLLLLGIFLANG. The C-type lectin domain occupies 46 to 161; sequence LRGAFLTVYK…CDDNLLVVCE (116 aa). N-linked (GlcNAc...) asparagine glycans are attached at residues Asn61 and Asn122. 2 cysteine pairs are disulfide-bonded: Cys83–Cys160 and Cys138–Cys152.

This sequence belongs to the alpha-type phospholipase A2 inhibitor family. As to quaternary structure, homotrimer; non-covalently linked. In terms of tissue distribution, expressed by the liver.

It is found in the secreted. In terms of biological role, this phospholipase A2 inhibitor binds directly phospholipase A2 in the presence or absence of calcium. The sequence is that of Phospholipase A2 inhibitor clone 06/08 from Bothrops neuwiedi (Neuwied's lancehead).